The following is a 238-amino-acid chain: tRNA1(Val) (adenine(37)-N6)-methyltransferase (238 aa).

The protein belongs to the methyltransferase superfamily. tRNA (adenine-N(6)-)-methyltransferase family.

The protein resides in the cytoplasm. It carries out the reaction adenosine(37) in tRNA1(Val) + S-adenosyl-L-methionine = N(6)-methyladenosine(37) in tRNA1(Val) + S-adenosyl-L-homocysteine + H(+). Functionally, specifically methylates the adenine in position 37 of tRNA(1)(Val) (anticodon cmo5UAC). This Shewanella baltica (strain OS223) protein is tRNA1(Val) (adenine(37)-N6)-methyltransferase.